The chain runs to 348 residues: Transmembrane protease serine 12 (348 aa).

The N-terminal stretch at 1-20 is a signal peptide; the sequence is MRLGLLSVALLFVGSSHLYS. Residues 21 to 324 are Extracellular-facing; it reads DHYSPSGRHR…EHFFHASTQG (304 aa). A disordered region spans residues 24–46; the sequence is SPSGRHRLGPSPEPAASSQQAEA. The region spanning 78 to 318 is the Peptidase S1 domain; sequence IIGGTEAQAG…YQKWLTEHFF (241 aa). Cysteine 107 and cysteine 123 form a disulfide bridge. Catalysis depends on charge relay system residues histidine 122 and aspartate 171. Intrachain disulfides connect cysteine 206-cysteine 274, cysteine 237-cysteine 253, and cysteine 264-cysteine 294. 2 N-linked (GlcNAc...) asparagine glycosylation sites follow: asparagine 219 and asparagine 249. Residue serine 268 is the Charge relay system of the active site. A helical membrane pass occupies residues 325–345; the sequence is ILTINILRGQILIALCFVILL. At 346 to 348 the chain is on the cytoplasmic side; it reads ATT.

This sequence belongs to the peptidase S1 family. As to expression, in testis, expressed in spermatocytes and spermatids (at protein level).

The protein resides in the cell membrane. It is found in the cytoplasmic vesicle. It localises to the secretory vesicle. The protein localises to the acrosome. Functionally, required for male fertility. Plays a critical role in sperm capacitation and acrosome reactions during fertilization, and also plays a role in the regulation of proteins involved in spermatogenesis. Regulates protein pathways that promote chromosomal synapsis formation, double-strand break repair, formation of the inner mitochondrial membrane cristae and apoptosis in developing sperm. Required for normal sperm motility and binding to the zona pellucida, potentially via a role in ADAM3 protein maturation. This chain is Transmembrane protease serine 12, found in Homo sapiens (Human).